A 70-amino-acid chain; its full sequence is Putative membrane protein insertion efficiency factor (70 aa).

The protein belongs to the UPF0161 family.

Its subcellular location is the cell inner membrane. Could be involved in insertion of integral membrane proteins into the membrane. The chain is Putative membrane protein insertion efficiency factor from Rhizorhabdus wittichii (strain DSM 6014 / CCUG 31198 / JCM 15750 / NBRC 105917 / EY 4224 / RW1) (Sphingomonas wittichii).